A 670-amino-acid polypeptide reads, in one-letter code: Probable Rho-GTPase-activating protein 9 (670 aa).

Residues 3-392 (DGFSNSFWSR…SFKNLDSLRD (390 aa)) enclose the F-BAR domain. The interval 141–161 (NSKKSNLTDRKPIPTSRKSNK) is disordered. The Rho-GAP domain occupies 425-622 (SSLTEDNLIV…DLINEFENLF (198 aa)). Threonine 640 carries the post-translational modification Phosphothreonine. The segment covering 641 to 663 (PITTSPQKLKLPRSSSPCKNPSP) has biased composition (polar residues). Residues 641-670 (PITTSPQKLKLPRSSSPCKNPSPTRRFRPF) are disordered. Position 645 is a phosphoserine (serine 645).

The protein resides in the cytoplasm. The polypeptide is Probable Rho-GTPase-activating protein 9 (rga9) (Schizosaccharomyces pombe (strain 972 / ATCC 24843) (Fission yeast)).